The primary structure comprises 238 residues: Probable transcriptional regulatory protein llmg_0242 (238 aa).

It belongs to the TACO1 family. YeeN subfamily.

The protein localises to the cytoplasm. This is Probable transcriptional regulatory protein llmg_0242 from Lactococcus lactis subsp. cremoris (strain MG1363).